A 64-amino-acid chain; its full sequence is Alpha-like toxin BmK M2 (64 aa).

The 63-residue stretch at 2–64 (RDAYIAKPHN…VPIRVPGKCH (63 aa)) folds into the LCN-type CS-alpha/beta domain. Disulfide bonds link C12-C63, C16-C36, C22-C46, and C26-C48.

Belongs to the long (4 C-C) scorpion toxin superfamily. Sodium channel inhibitor family. Alpha subfamily. In terms of tissue distribution, expressed by the venom gland.

It localises to the secreted. Alpha toxins bind voltage-independently at site-3 of sodium channels (Nav) and inhibit the inactivation of the activated channels, thereby blocking neuronal transmission. This toxin is active against both mammals and insects, and is classified as an alpha-like toxin. The sequence is that of Alpha-like toxin BmK M2 from Olivierus martensii (Manchurian scorpion).